The sequence spans 324 residues: Aldo-keto reductase family 1 member A1 (324 aa).

Residue Ser-3 is modified to Phosphoserine. NADP(+) is bound by residues Gly-10–Gly-19, Thr-20, and Trp-21. At Ser-37 the chain carries Phosphoserine. Asp-44 contacts NADP(+). The active-site Proton donor is Tyr-49. The residue at position 126 (Lys-126) is an N6-acetyllysine; alternate. Lys-126 is modified (N6-succinyllysine; alternate). At Lys-144 the chain carries N6-succinyllysine. 13 residues coordinate NADP(+): Ser-161, Asn-162, Ser-210, Leu-212, Ser-214, Ser-215, Lys-262, Ser-263, Ile-264, Thr-265, Arg-268, Gln-271, and Asn-272. Ser-210 is subject to Phosphoserine.

This sequence belongs to the aldo/keto reductase family.

It is found in the cytoplasm. The protein localises to the cytosol. The protein resides in the apical cell membrane. It catalyses the reaction a primary alcohol + NADP(+) = an aldehyde + NADPH + H(+). It carries out the reaction L-gulonate + NADP(+) = aldehydo-D-glucuronate + NADPH + H(+). The enzyme catalyses L-gulono-1,4-lactone + NADP(+) = D-glucurono-3,6-lactone + NADPH + H(+). The catalysed reaction is allyl alcohol + NADP(+) = acrolein + NADPH + H(+). It catalyses the reaction glycerol + NADP(+) = D-glyceraldehyde + NADPH + H(+). It carries out the reaction glycerol + NADP(+) = L-glyceraldehyde + NADPH + H(+). The enzyme catalyses hydroxyacetone + NADP(+) = methylglyoxal + NADPH + H(+). The catalysed reaction is 3-deoxyfructose + NADP(+) = 3-deoxyglucosone + NADPH + H(+). It catalyses the reaction (R)-mevalonate + NADP(+) = (R)-mevaldate + NADPH + H(+). It carries out the reaction S-nitroso-CoA + NADPH + H(+) = sulfinamide-CoA + NADP(+). The enzyme catalyses S-nitrosoglutathione + NADPH + H(+) = S-(hydroxysulfenamide)glutathione + NADP(+). In terms of biological role, catalyzes the NADPH-dependent reduction of a wide variety of carbonyl-containing compounds to their corresponding alcohols. Displays enzymatic activity towards endogenous metabolites such as aromatic and aliphatic aldehydes, ketones, monosaccharides and bile acids, with a preference for negatively charged substrates, such as glucuronate and succinic semialdehyde. Plays an important role by catalyzing the reduction of D-glucuronic acid and D-glucurono-gamma-lactone. Functions as a detoxifiying enzyme by reducing a range of toxic aldehydes. Reduces methylglyoxal and 3-deoxyglucosone, which are present at elevated levels under hyperglycemic conditions and are cytotoxic. Involved also in the detoxification of lipid-derived aldehydes like acrolein. Plays a role in the activation of procarcinogens, such as polycyclic aromatic hydrocarbon trans-dihydrodiols, and in the metabolism of various xenobiotics and drugs. Also acts as an inhibitor of protein S-nitrosylation by mediating degradation of S-nitroso-coenzyme A (S-nitroso-CoA), a cofactor required to S-nitrosylate proteins. S-nitroso-CoA reductase activity is involved in reprogramming intermediary metabolism in renal proximal tubules, notably by inhibiting protein S-nitrosylation of isoform 2 of PKM (PKM2). Also acts as a S-nitroso-glutathione reductase by catalyzing the NADPH-dependent reduction of S-nitrosoglutathione. Displays no reductase activity towards retinoids. The protein is Aldo-keto reductase family 1 member A1 (AKR1A1) of Cricetulus griseus (Chinese hamster).